Here is a 346-residue protein sequence, read N- to C-terminus: Heat-inducible transcription repressor HrcA (346 aa).

This sequence belongs to the HrcA family.

In terms of biological role, negative regulator of class I heat shock genes (grpE-dnaK-dnaJ and groELS operons). Prevents heat-shock induction of these operons. This Pediococcus pentosaceus (strain ATCC 25745 / CCUG 21536 / LMG 10740 / 183-1w) protein is Heat-inducible transcription repressor HrcA.